Reading from the N-terminus, the 411-residue chain is MDYFTAIGGVAMFTLIIMSFVAIILAARSRLVSSGDVTIHINDNPDNDVVTPAGGKLLQTLASEGIFLSSACGGGGTCAQCRCRVIEGGGSILPTEEGYFTQGEIRNHMRLACQVAVKQDMKIEIDPEFFDVQKWECEVISNDNVATFIKELVLKIPEGEEVNFRAGGYVQLEAPPHEVHYKDFDIAEEYQDDWNNFGIFKYVSKVDEPVIRAYSMANYPDEKGLIKFNIRIASPPPRGPDGIPPGKMSSWTFSLKPGDKVTVSGPYGEFFAKKTEAEMIFVGGGAGMAPMRSHIFDQLKRLNSDRKISFWYGARSIREMFYVEDYDQLEADFANFQWHVALSDPQPEDNWTGYTGFIHNVLLEEYLKGHPNPEDCEYYMCGPPMMNAAVIDMLHSLGVEDENIMLDDFGG.

Residues alanine 6–alanine 26 form a helical membrane-spanning segment. A 2Fe-2S ferredoxin-type domain is found at glycine 35 to phenylalanine 129. Residues cysteine 72, cysteine 78, cysteine 81, and cysteine 113 each coordinate [2Fe-2S] cluster. An FAD-binding FR-type domain is found at valine 132–lysine 273.

Belongs to the NqrF family. In terms of assembly, composed of six subunits; NqrA, NqrB, NqrC, NqrD, NqrE and NqrF. The cofactor is [2Fe-2S] cluster. It depends on FAD as a cofactor.

Its subcellular location is the cell inner membrane. The catalysed reaction is a ubiquinone + n Na(+)(in) + NADH + H(+) = a ubiquinol + n Na(+)(out) + NAD(+). Functionally, NQR complex catalyzes the reduction of ubiquinone-1 to ubiquinol by two successive reactions, coupled with the transport of Na(+) ions from the cytoplasm to the periplasm. The first step is catalyzed by NqrF, which accepts electrons from NADH and reduces ubiquinone-1 to ubisemiquinone by a one-electron transfer pathway. This Psychrobacter arcticus (strain DSM 17307 / VKM B-2377 / 273-4) protein is Na(+)-translocating NADH-quinone reductase subunit F.